Consider the following 200-residue polypeptide: Methylthioribulose-1-phosphate dehydratase (200 aa).

Positions 90 and 92 each coordinate Zn(2+).

This sequence belongs to the aldolase class II family. MtnB subfamily. The cofactor is Zn(2+).

It carries out the reaction 5-(methylsulfanyl)-D-ribulose 1-phosphate = 5-methylsulfanyl-2,3-dioxopentyl phosphate + H2O. It participates in amino-acid biosynthesis; L-methionine biosynthesis via salvage pathway; L-methionine from S-methyl-5-thio-alpha-D-ribose 1-phosphate: step 2/6. Its function is as follows. Catalyzes the dehydration of methylthioribulose-1-phosphate (MTRu-1-P) into 2,3-diketo-5-methylthiopentyl-1-phosphate (DK-MTP-1-P). This Sodalis glossinidius (strain morsitans) protein is Methylthioribulose-1-phosphate dehydratase.